The chain runs to 354 residues: Opsin-5 (354 aa).

The Extracellular segment spans residues methionine 1 to aspartate 33. The N-linked (GlcNAc...) asparagine glycan is linked to asparagine 4. The chain crosses the membrane as a helical span at residues leucine 34–valine 54. Topologically, residues leucine 55 to asparagine 74 are cytoplasmic. Residues leucine 75–phenylalanine 95 traverse the membrane as a helical segment. Residues cysteine 96–tryptophan 108 lie on the Extracellular side of the membrane. Cysteine 106 and cysteine 183 are joined by a disulfide. Residues tyrosine 109 to leucine 129 traverse the membrane as a helical segment. The Cytoplasmic segment spans residues aspartate 130–tyrosine 150. The helical transmembrane segment at isoleucine 151–leucine 171 threads the bilayer. The Extracellular segment spans residues glycine 172 to glutamine 197. Residues valine 198–serine 218 form a helical membrane-spanning segment. Residues tyrosine 219–lysine 252 are Cytoplasmic-facing. Residues valine 253–valine 273 traverse the membrane as a helical segment. Residues tryptophan 274 to serine 288 lie on the Extracellular side of the membrane. Residues valine 289–isoleucine 309 traverse the membrane as a helical segment. At lysine 296 the chain carries N6-(retinylidene)lysine. The Cytoplasmic segment spans residues aspartate 310–tryptophan 353. 2 S-palmitoyl cysteine lipidation sites follow: cysteine 315 and cysteine 316.

The protein belongs to the G-protein coupled receptor 1 family. Opsin subfamily. It is uncertain whether Cys-315 or Cys-316 is palmitoylated. In terms of tissue distribution, detected in brain and retina and cell lines derived from neural retina.

Its subcellular location is the cell membrane. Its function is as follows. G-protein coupled receptor which selectively activates G(i) type G proteins via ultraviolet A (UVA) light-mediated activation in the retina. Preferentially binds the chromophore 11-cis retinal and is a bistable protein that displays emission peaks at 380 nm (UVA light) and 470 nm (blue light). Required for the light-response in the inner plexiform layer, and contributes to the regulation of the light-response in the nerve fiber layer, via phosphorylated DAT/SLC6A3 dopamine uptake. Involved in local corneal and retinal circadian rhythm photoentrainment via modulation of the UVA light-induced phase-shift of the retina clock. Acts as a circadian photoreceptor in the outer ear, via modulation of circadian clock-gene expression in response to violet light during the light-to-dark transition phase and night phase of the circadian cycle. Required in the retina to negatively regulate hyaloid vessel regression during postnatal development via light-dependent OPN5-SLC32A1-DRD2-VEGFR2 signaling. Involved in the light-dependent regulation of retina and vitreous compartment dopamine levels. This Homo sapiens (Human) protein is Opsin-5 (OPN5).